Reading from the N-terminus, the 133-residue chain is MTMSDPIADFLTRIRNANMVRHETVETPASKIKINIAQILKDEGFITDYQVVDTPNKQGLISLSLKYGPNRERIITGLKRISKPGLRSYVQADSVPKVLNGLGIAILSTSEGVMTDKAARAKMIGGEVIAYVW.

It belongs to the universal ribosomal protein uS8 family. Part of the 30S ribosomal subunit. Contacts proteins S5 and S12.

One of the primary rRNA binding proteins, it binds directly to 16S rRNA central domain where it helps coordinate assembly of the platform of the 30S subunit. This Oenococcus oeni (strain ATCC BAA-331 / PSU-1) protein is Small ribosomal subunit protein uS8.